The chain runs to 196 residues: uncharacterized protein (196 aa).

Residues 22–42 (MIIIPMALLVFILIIGSFFAI) form a helical membrane-spanning segment.

It localises to the cell membrane. This is an uncharacterized protein from Lactobacillus acidophilus (strain ATCC 700396 / NCK56 / N2 / NCFM).